The sequence spans 257 residues: Aspartate/glutamate leucyltransferase (257 aa).

This sequence belongs to the R-transferase family. Bpt subfamily.

It is found in the cytoplasm. The catalysed reaction is N-terminal L-glutamyl-[protein] + L-leucyl-tRNA(Leu) = N-terminal L-leucyl-L-glutamyl-[protein] + tRNA(Leu) + H(+). It carries out the reaction N-terminal L-aspartyl-[protein] + L-leucyl-tRNA(Leu) = N-terminal L-leucyl-L-aspartyl-[protein] + tRNA(Leu) + H(+). In terms of biological role, functions in the N-end rule pathway of protein degradation where it conjugates Leu from its aminoacyl-tRNA to the N-termini of proteins containing an N-terminal aspartate or glutamate. The protein is Aspartate/glutamate leucyltransferase of Rhodopseudomonas palustris (strain BisB5).